The chain runs to 571 residues: Sulfite reductase [NADPH] hemoprotein beta-component (571 aa).

4 residues coordinate [4Fe-4S] cluster: Cys-436, Cys-442, Cys-481, and Cys-485. Cys-485 contacts siroheme.

The protein belongs to the nitrite and sulfite reductase 4Fe-4S domain family. Alpha(8)-beta(8). The alpha component is a flavoprotein, the beta component is a hemoprotein. Siroheme serves as cofactor. It depends on [4Fe-4S] cluster as a cofactor.

It carries out the reaction hydrogen sulfide + 3 NADP(+) + 3 H2O = sulfite + 3 NADPH + 4 H(+). It functions in the pathway sulfur metabolism; hydrogen sulfide biosynthesis; hydrogen sulfide from sulfite (NADPH route): step 1/1. Its function is as follows. Component of the sulfite reductase complex that catalyzes the 6-electron reduction of sulfite to sulfide. This is one of several activities required for the biosynthesis of L-cysteine from sulfate. In Bacillus velezensis (strain DSM 23117 / BGSC 10A6 / LMG 26770 / FZB42) (Bacillus amyloliquefaciens subsp. plantarum), this protein is Sulfite reductase [NADPH] hemoprotein beta-component.